A 425-amino-acid chain; its full sequence is Ribosomal protein uS12 methylthiotransferase RimO (425 aa).

Residues 2-115 (KNFTVITLGC…IIDYIKQFSK (114 aa)) form the MTTase N-terminal domain. Residues C11, C47, C78, C142, C146, and C149 each contribute to the [4Fe-4S] cluster site. Residues 128 to 357 (VEPPSYRYIK…MARQAVISLE (230 aa)) enclose the Radical SAM core domain. The 66-residue stretch at 360–425 (RALIGKKYEA…YEYDVKGVIV (66 aa)) folds into the TRAM domain.

The protein belongs to the methylthiotransferase family. RimO subfamily. The cofactor is [4Fe-4S] cluster.

The protein localises to the cytoplasm. It carries out the reaction L-aspartate(89)-[ribosomal protein uS12]-hydrogen + (sulfur carrier)-SH + AH2 + 2 S-adenosyl-L-methionine = 3-methylsulfanyl-L-aspartate(89)-[ribosomal protein uS12]-hydrogen + (sulfur carrier)-H + 5'-deoxyadenosine + L-methionine + A + S-adenosyl-L-homocysteine + 2 H(+). In terms of biological role, catalyzes the methylthiolation of an aspartic acid residue of ribosomal protein uS12. The protein is Ribosomal protein uS12 methylthiotransferase RimO of Thermodesulfovibrio yellowstonii (strain ATCC 51303 / DSM 11347 / YP87).